Here is a 316-residue protein sequence, read N- to C-terminus: HPr kinase/phosphorylase (316 aa).

Residues His143 and Lys164 contribute to the active site. 158 to 165 contacts ATP; the sequence is GEAGSGKS. Residue Ser165 participates in Mg(2+) binding. Asp182 functions as the Proton acceptor; for phosphorylation activity. Proton donor; for dephosphorylation activity in the catalytic mechanism. An important for the catalytic mechanism of both phosphorylation and dephosphorylation region spans residues 206 to 215; sequence LEVRGLGVLN. Glu207 is a Mg(2+) binding site. Arg251 is a catalytic residue. An important for the catalytic mechanism of dephosphorylation region spans residues 272 to 277; the sequence is PVMPGR.

This sequence belongs to the HPrK/P family. Homohexamer. Mg(2+) is required as a cofactor.

The enzyme catalyses [HPr protein]-L-serine + ATP = [HPr protein]-O-phospho-L-serine + ADP + H(+). It carries out the reaction [HPr protein]-O-phospho-L-serine + phosphate + H(+) = [HPr protein]-L-serine + diphosphate. Its function is as follows. Catalyzes the ATP- as well as the pyrophosphate-dependent phosphorylation of a specific serine residue in HPr, a phosphocarrier protein of the phosphoenolpyruvate-dependent sugar phosphotransferase system (PTS). HprK/P also catalyzes the pyrophosphate-producing, inorganic phosphate-dependent dephosphorylation (phosphorolysis) of seryl-phosphorylated HPr (P-Ser-HPr). This is HPr kinase/phosphorylase from Stenotrophomonas maltophilia (strain R551-3).